Reading from the N-terminus, the 145-residue chain is MLRHSSTPAHVVARDLSVDYVTEEGEREAIPGTLRYDPADPFAVELILRPGEEAITWIFARALLAEGIEVPAGTGDVRIRPTRSKGQTVITVSLSSPSGHADLELAKSKVTAFLADCHGQVPAGRESNGIDWNNELHMLLRTRNT.

The protein belongs to the SsgA family.

It localises to the cell septum. Functionally, involved in sporulation-specific cell division. In Frankia casuarinae (strain DSM 45818 / CECT 9043 / HFP020203 / CcI3), this protein is Sporulation-specific cell division protein Francci3_3418.